The primary structure comprises 692 residues: Elongation factor G 2 (692 aa).

The tr-type G domain occupies 8 to 283; it reads EKTRNIGIMA…AVIDYMPSPV (276 aa). GTP is bound by residues 17 to 24, 81 to 85, and 135 to 138; these read AHIDAGKT, DTPGH, and NKMD.

It belongs to the TRAFAC class translation factor GTPase superfamily. Classic translation factor GTPase family. EF-G/EF-2 subfamily.

It is found in the cytoplasm. Catalyzes the GTP-dependent ribosomal translocation step during translation elongation. During this step, the ribosome changes from the pre-translocational (PRE) to the post-translocational (POST) state as the newly formed A-site-bound peptidyl-tRNA and P-site-bound deacylated tRNA move to the P and E sites, respectively. Catalyzes the coordinated movement of the two tRNA molecules, the mRNA and conformational changes in the ribosome. This Syntrophotalea carbinolica (strain DSM 2380 / NBRC 103641 / GraBd1) (Pelobacter carbinolicus) protein is Elongation factor G 2.